The primary structure comprises 412 residues: Adenosine receptor A2a (412 aa).

The Extracellular portion of the chain corresponds to 1 to 7 (MSTMGSW). The helical transmembrane segment at 8 to 32 (VYITVELAIAVLAILGNVLVCWAVW) threads the bilayer. Residues 33–42 (LNSNLQNVTN) lie on the Cytoplasmic side of the membrane. The helical transmembrane segment at 43-66 (YFVVSLAAADIAVGVLAIPFAITI) threads the bilayer. At 67–77 (STGFCAACHNC) the chain is on the extracellular side. 3 disulfide bridges follow: C71-C159, C74-C146, and C77-C166. Residues 78-100 (LFFACFVLVLTQSSIFSLLAIAI) form a helical membrane-spanning segment. The Cytoplasmic portion of the chain corresponds to 101–120 (DRYIAIRIPLRYNGLVTGTR). A helical membrane pass occupies residues 121 to 143 (AKGIIAVCWVLSFAIGLTPMLGW). The Extracellular segment spans residues 144-173 (NNCSQPKEGRNYSQGCGEGQVACLFEDVVP). N-linked (GlcNAc...) asparagine glycans are attached at residues N145 and N154. Residue E169 participates in adenosine binding. A helical membrane pass occupies residues 174–198 (MNYMVYYNFFAFVLVPLLLMLGVYL). Topologically, residues 199–234 (RIFLAARRQLKQMESQPLPGERARSTLQKEVHAAKS) are cytoplasmic. Residues 235 to 258 (LAIIVGLFALCWLPLHIINCFTFF) form a helical membrane-spanning segment. N253 lines the adenosine pocket. C259 and C262 are disulfide-bonded. Over 259–266 (CPECSHAP) the chain is Extracellular. Residues 267 to 290 (LWLMYLTIVLSHTNSVVNPFIYAY) traverse the membrane as a helical segment. Positions 277 and 278 each coordinate adenosine. The Cytoplasmic segment spans residues 291–412 (RIREFRQTFR…PLAQDGAGVS (122 aa)). Residues 392–412 (GACPESPGLEGPLAQDGAGVS) form a disordered region.

It belongs to the G-protein coupled receptor 1 family. Interacts (via cytoplasmic C-terminal domain) with USP4; the interaction is direct. May interact with DRD4. Interacts with NECAB2. Interacts (via cytoplasmic C-terminal domain) with GAS2L2; interaction enhances receptor-mediated adenylyl cyclase activity. In terms of processing, ubiquitinated. Deubiquitinated by USP4; leading to stabilization and expression at the cell surface.

The protein localises to the cell membrane. Functionally, receptor for adenosine. The activity of this receptor is mediated by G proteins which activate adenylyl cyclase. The protein is Adenosine receptor A2a (ADORA2A) of Canis lupus familiaris (Dog).